Here is a 347-residue protein sequence, read N- to C-terminus: tRNA pseudouridine synthase D (347 aa).

The active-site Nucleophile is D81. Positions 158-304 (GVPNYFGNQR…MRHDRRAIAL (147 aa)) constitute a TRUD domain.

This sequence belongs to the pseudouridine synthase TruD family.

The catalysed reaction is uridine(13) in tRNA = pseudouridine(13) in tRNA. Responsible for synthesis of pseudouridine from uracil-13 in transfer RNAs. In Vibrio vulnificus (strain YJ016), this protein is tRNA pseudouridine synthase D.